Here is a 491-residue protein sequence, read N- to C-terminus: Chromosomal replication initiator protein DnaA (491 aa).

The tract at residues 1-69 (MTTWDKCLKK…TIQECHGNDL (69 aa)) is domain I, interacts with DnaA modulators. The segment at 69 to 154 (LIIEYSNKKF…KEDEEYSFGL (86 aa)) is domain II. A domain III, AAA+ region region spans residues 155-371 (PLKEKYVFDS…GALNRVLTTS (217 aa)). Positions 199, 201, 202, and 203 each coordinate ATP. The segment at 372–491 (KFNHKDPTIE…YELLLDKISR (120 aa)) is domain IV, binds dsDNA.

This sequence belongs to the DnaA family. As to quaternary structure, oligomerizes as a right-handed, spiral filament on DNA at oriC.

It is found in the cytoplasm. In terms of biological role, plays an essential role in the initiation and regulation of chromosomal replication. ATP-DnaA binds to the origin of replication (oriC) to initiate formation of the DNA replication initiation complex once per cell cycle. Binds the DnaA box (a 9 base pair repeat at the origin) and separates the double-stranded (ds)DNA. Forms a right-handed helical filament on oriC DNA; dsDNA binds to the exterior of the filament while single-stranded (ss)DNA is stabiized in the filament's interior. The ATP-DnaA-oriC complex binds and stabilizes one strand of the AT-rich DNA unwinding element (DUE), permitting loading of DNA polymerase. After initiation quickly degrades to an ADP-DnaA complex that is not apt for DNA replication. Binds acidic phospholipids. The protein is Chromosomal replication initiator protein DnaA of Francisella tularensis subsp. holarctica (strain FTNF002-00 / FTA).